Reading from the N-terminus, the 228-residue chain is MRIVAPVMPRHFDEAQAIDISKYEDVNLIEWRADFLPKDEIVAVAPAIFEKFAGKEIIFTLRTVQEGGNITLSSQEYVDIIKEINAIYNPDYIDFEYFTHKSVFQEMLDFPNLILSYHNFEETPENLMEAFSEMTKLAPRVVKIAVMPQSEQDVLDLMNYTRGFKTLNPEQEFATISMGKLGRLSRFAGDVIGSSWTYVSLDHVSGPGQVTLNDMKRIIEVLEMDISN.

3-dehydroquinate is bound by residues 30–32 and Arg62; that span reads EWR. The active-site Proton donor/acceptor is the His118. Lys143 functions as the Schiff-base intermediate with substrate in the catalytic mechanism. Residues Arg186, Ser205, and Gln209 each contribute to the 3-dehydroquinate site.

This sequence belongs to the type-I 3-dehydroquinase family. In terms of assembly, homodimer.

The enzyme catalyses 3-dehydroquinate = 3-dehydroshikimate + H2O. It participates in metabolic intermediate biosynthesis; chorismate biosynthesis; chorismate from D-erythrose 4-phosphate and phosphoenolpyruvate: step 3/7. Involved in the third step of the chorismate pathway, which leads to the biosynthesis of aromatic amino acids. Catalyzes the cis-dehydration of 3-dehydroquinate (DHQ) and introduces the first double bond of the aromatic ring to yield 3-dehydroshikimate. The protein is 3-dehydroquinate dehydratase of Streptococcus pyogenes serotype M12 (strain MGAS9429).